Consider the following 616-residue polypeptide: Dihydroxy-acid dehydratase 1 (616 aa).

Aspartate 81 provides a ligand contact to Mg(2+). A [2Fe-2S] cluster-binding site is contributed by cysteine 122. Positions 123 and 124 each coordinate Mg(2+). Lysine 124 is modified (N6-carboxylysine). Residue cysteine 195 coordinates [2Fe-2S] cluster. Position 491 (glutamate 491) interacts with Mg(2+). The active-site Proton acceptor is the serine 517.

Belongs to the IlvD/Edd family. As to quaternary structure, homodimer. It depends on [2Fe-2S] cluster as a cofactor. The cofactor is Mg(2+).

It catalyses the reaction (2R)-2,3-dihydroxy-3-methylbutanoate = 3-methyl-2-oxobutanoate + H2O. The catalysed reaction is (2R,3R)-2,3-dihydroxy-3-methylpentanoate = (S)-3-methyl-2-oxopentanoate + H2O. It functions in the pathway amino-acid biosynthesis; L-isoleucine biosynthesis; L-isoleucine from 2-oxobutanoate: step 3/4. Its pathway is amino-acid biosynthesis; L-valine biosynthesis; L-valine from pyruvate: step 3/4. Functions in the biosynthesis of branched-chain amino acids. Catalyzes the dehydration of (2R,3R)-2,3-dihydroxy-3-methylpentanoate (2,3-dihydroxy-3-methylvalerate) into 2-oxo-3-methylpentanoate (2-oxo-3-methylvalerate) and of (2R)-2,3-dihydroxy-3-methylbutanoate (2,3-dihydroxyisovalerate) into 2-oxo-3-methylbutanoate (2-oxoisovalerate), the penultimate precursor to L-isoleucine and L-valine, respectively. This chain is Dihydroxy-acid dehydratase 1, found in Bradyrhizobium diazoefficiens (strain JCM 10833 / BCRC 13528 / IAM 13628 / NBRC 14792 / USDA 110).